Consider the following 59-residue polypeptide: Large ribosomal subunit protein uL30 (59 aa).

This sequence belongs to the universal ribosomal protein uL30 family. As to quaternary structure, part of the 50S ribosomal subunit.

This Rhodococcus erythropolis (strain PR4 / NBRC 100887) protein is Large ribosomal subunit protein uL30.